A 656-amino-acid chain; its full sequence is MTILENIRGPRDLKALSEAELGELSDEIRDFLVHAVARTGGHLGPNLGVVELTVALHRVFESPDDRILWDTGHQSYVHKLLTGRQDFSKLRSKGGLSGYPSREESAHDVIENSHASTVLGWADGLAKARQVQGERSHVVAVIGDGALTGGMAWEALNNIAAARDRPLIIVVNDNERSYAPTIGGLANHLATLRTTDGYERALAWGKDVLQRTPVVGHTVYEALHGAKKGFKDAFAPQGLFEDLGLKYLGPIDGHDIGAVESALRRAKRFHGPVLVHCLTEKGRGYEPALRDEEDHFHTVGVMDPLTCEPLGPAGGPSWTSVFGEEIVRIGEERADVVAITAAMLHPVGLAPFAERFPDRVWDVGIAEQHAAVSAAGLATGGLHPVVAVYATFLNRAFDQLLMDVALHRCGVTFVLDRAGVTGVDGASHNGMWDMSVLQVVPGLRIAAPRDADQLRTQLREAVAVDDAPTLLRFPKESVGPAVPAVDRIGGLDVLHTADRSEVLLVAVGVMAPVCLGAAELLEARGIGCTVVDPRWVKPVDPALAPLAARHRLVAVVEDNSRAAGVGSAVALALGDAEVDVPVRRFGIPEQFLAHAKRAEVLADIGLTPVDVAGRIAASLALAEPAGDRAGGPAVEQPGDGRMSGDGRIVMPAQGEN.

Thiamine diphosphate contacts are provided by residues His73 and 113–115 (SHA). Asp144 is a binding site for Mg(2+). Thiamine diphosphate is bound by residues 145-146 (GA), Asn174, Tyr285, and Glu367. Mg(2+) is bound at residue Asn174. The tract at residues 625 to 656 (AGDRAGGPAVEQPGDGRMSGDGRIVMPAQGEN) is disordered.

The protein belongs to the transketolase family. DXPS subfamily. In terms of assembly, homodimer. Mg(2+) serves as cofactor. It depends on thiamine diphosphate as a cofactor.

It carries out the reaction D-glyceraldehyde 3-phosphate + pyruvate + H(+) = 1-deoxy-D-xylulose 5-phosphate + CO2. It functions in the pathway metabolic intermediate biosynthesis; 1-deoxy-D-xylulose 5-phosphate biosynthesis; 1-deoxy-D-xylulose 5-phosphate from D-glyceraldehyde 3-phosphate and pyruvate: step 1/1. Functionally, catalyzes the acyloin condensation reaction between C atoms 2 and 3 of pyruvate and glyceraldehyde 3-phosphate to yield 1-deoxy-D-xylulose-5-phosphate (DXP). The protein is 1-deoxy-D-xylulose-5-phosphate synthase 1 of Streptomyces coelicolor (strain ATCC BAA-471 / A3(2) / M145).